A 162-amino-acid polypeptide reads, in one-letter code: Shikimate kinase (162 aa).

ATP is bound at residue 11-16 (GSGKSS). Ser15 contacts Mg(2+). Substrate contacts are provided by Asp33, Arg57, and Gly80. Arg116 serves as a coordination point for ATP. Residue Arg132 participates in substrate binding.

This sequence belongs to the shikimate kinase family. Monomer. Requires Mg(2+) as cofactor.

It is found in the cytoplasm. It carries out the reaction shikimate + ATP = 3-phosphoshikimate + ADP + H(+). The protein operates within metabolic intermediate biosynthesis; chorismate biosynthesis; chorismate from D-erythrose 4-phosphate and phosphoenolpyruvate: step 5/7. Catalyzes the specific phosphorylation of the 3-hydroxyl group of shikimic acid using ATP as a cosubstrate. In Helicobacter pylori (strain P12), this protein is Shikimate kinase.